Here is a 632-residue protein sequence, read N- to C-terminus: Mediator of RNA polymerase II transcription subunit 17 (632 aa).

Disordered stretches follow at residues 1–21 (MSDS…RPDS) and 50–72 (EDKH…DLET). The segment covering 11-21 (PIREKRDRPDS) has biased composition (basic and acidic residues). A compositionally biased stretch (acidic residues) spans 58–72 (EEDDEGDKESTDLET).

It belongs to the Mediator complex subunit 17 family. In terms of assembly, component of the Mediator complex.

The protein localises to the nucleus. Functionally, component of the Mediator complex, a coactivator involved in the regulated transcription of nearly all RNA polymerase II-dependent genes. Mediator functions as a bridge to convey information from gene-specific regulatory proteins to the basal RNA polymerase II transcription machinery. Mediator is recruited to promoters by direct interactions with regulatory proteins and serves as a scaffold for the assembly of a functional preinitiation complex with RNA polymerase II and the general transcription factors. This is Mediator of RNA polymerase II transcription subunit 17 (srb4) from Emericella nidulans (strain FGSC A4 / ATCC 38163 / CBS 112.46 / NRRL 194 / M139) (Aspergillus nidulans).